We begin with the raw amino-acid sequence, 254 residues long: uncharacterized protein (254 aa).

Helical transmembrane passes span 33 to 53, 70 to 90, 92 to 112, 133 to 153, and 223 to 243; these read MLWVGVFIHLLYNKSLLLFFI, FNKLVYIGVFLFLLSFILFKS, FALSFLVFYLIGIFLYYLNFM, FIIFLNAILFVIPYCIFILLI, and FLVFICLSYILYIVSPFPLIF.

To M.jannaschii MJ0902.

The protein resides in the cell membrane. This is an uncharacterized protein from Methanocaldococcus jannaschii (strain ATCC 43067 / DSM 2661 / JAL-1 / JCM 10045 / NBRC 100440) (Methanococcus jannaschii).